Consider the following 506-residue polypeptide: Protein MGF 505-9R (506 aa).

It belongs to the asfivirus MGF 505 family.

Plays a role in virus cell tropism, and may be required for efficient virus replication in macrophages. The protein is Protein MGF 505-9R of Ornithodoros (relapsing fever ticks).